The primary structure comprises 893 residues: Translation initiation factor IF-2 (893 aa).

Positions 49-303 (LNREAGSGPD…KGSSLQQGFQ (255 aa)) are disordered. Residues 68–82 (STLNIPGTGGKSKSV) show a composition bias toward polar residues. 2 stretches are compositionally biased toward basic and acidic residues: residues 93-159 (VKRD…KDKV) and 166-216 (DMTK…EENK). Residues 254–269 (GRGRNAKAARPAKKGN) are compositionally biased toward basic residues. Over residues 270–283 (KHAESKADREEARA) the composition is skewed to basic and acidic residues. The tr-type G domain occupies 392 to 561 (PRAPVVTIMG…LLQAEVLELK (170 aa)). The tract at residues 401-408 (GHVDHGKT) is G1. 401–408 (GHVDHGKT) contributes to the GTP binding site. Positions 426 to 430 (GITQH) are G2. Residues 447–450 (DTPG) form a G3 region. Residues 447–451 (DTPGH) and 501–504 (NKID) each bind GTP. Positions 501-504 (NKID) are G4. The interval 537-539 (SAK) is G5.

Belongs to the TRAFAC class translation factor GTPase superfamily. Classic translation factor GTPase family. IF-2 subfamily.

Its subcellular location is the cytoplasm. One of the essential components for the initiation of protein synthesis. Protects formylmethionyl-tRNA from spontaneous hydrolysis and promotes its binding to the 30S ribosomal subunits. Also involved in the hydrolysis of GTP during the formation of the 70S ribosomal complex. This chain is Translation initiation factor IF-2, found in Salmonella arizonae (strain ATCC BAA-731 / CDC346-86 / RSK2980).